The following is a 622-amino-acid chain: Palmitoyl-protein thioesterase-dolichyl pyrophosphate phosphatase fusion 1 (622 aa).

An N-terminal signal peptide occupies residues 1 to 24 (MLSCSSFLIFFLFSWVLLPMKSFA). Topologically, residues 25 to 405 (IPIISLDKVR…NVSEEKGPKS (381 aa)) are lumenal. C106 and C138 are joined by a disulfide. Residue S125 is part of the active site. An N-linked (GlcNAc...) asparagine glycan is attached at N223. D245 is a catalytic residue. An N-linked (GlcNAc...) asparagine glycan is attached at N260. H298 is an active-site residue. The N-linked (GlcNAc...) asparagine glycan is linked to N396. A helical membrane pass occupies residues 406–426 (FANLAFITIFSHFFYHIDDMW). Residues 427–428 (RS) are Cytoplasmic-facing. A helical membrane pass occupies residues 429-449 (TLGLFSLIPQIIGIIYLTVMF). Residues 450 to 488 (TGRELDTFMQFGGQVVNEFINYVVKVSLKYPRPADIEYG) are Lumenal-facing. Residues 489-511 (VGYGMPSSHSQFMGFFSAYMIAW) form a helical membrane-spanning segment. Residues 512-519 (DYKYRRSQ) are Cytoplasmic-facing. Residues 520–540 (CFSMLSFAKYAIYLTLSTFVC) form a helical membrane-spanning segment. Residues 541-552 (SSRYLLDFHYLT) lie on the Lumenal side of the membrane. The chain crosses the membrane as a helical span at residues 553 to 573 (QVVYGYMIGFGVGLFWVYLVG). At 574–622 (KLRSLGVTKWLLSLPPLQFFYIKDTIPHSKDNHKRQWLESKQFKNQKSN) the chain is on the cytoplasmic side.

This sequence in the N-terminal section; belongs to the palmitoyl-protein thioesterase family. It in the C-terminal section; belongs to the dolichyldiphosphatase family. Proteolytically cleaved, possibly by krp1.

The protein localises to the vacuole. The protein resides in the endoplasmic reticulum membrane. The catalysed reaction is S-hexadecanoyl-L-cysteinyl-[protein] + H2O = L-cysteinyl-[protein] + hexadecanoate + H(+). The enzyme catalyses a di-trans,poly-cis-dolichyl diphosphate + H2O = a di-trans,poly-cis-dolichyl phosphate + phosphate + H(+). Essential protein. Removes thioester-linked fatty acyl groups such as palmitate from modified cysteine residues in proteins or peptides during vacuolar degradation. Required for efficient N-glycosylation. Necessary for maintaining optimal levels of dolichol-linked oligosaccharides. The sequence is that of Palmitoyl-protein thioesterase-dolichyl pyrophosphate phosphatase fusion 1 (pdf1) from Schizosaccharomyces pombe (strain 972 / ATCC 24843) (Fission yeast).